The following is a 242-amino-acid chain: Probable transcriptional regulatory protein XCV3282 (242 aa).

This sequence belongs to the TACO1 family.

It localises to the cytoplasm. This chain is Probable transcriptional regulatory protein XCV3282, found in Xanthomonas euvesicatoria pv. vesicatoria (strain 85-10) (Xanthomonas campestris pv. vesicatoria).